A 164-amino-acid chain; its full sequence is Transcription elongation factor GreA (164 aa).

This sequence belongs to the GreA/GreB family.

Its function is as follows. Necessary for efficient RNA polymerase transcription elongation past template-encoded arresting sites. The arresting sites in DNA have the property of trapping a certain fraction of elongating RNA polymerases that pass through, resulting in locked ternary complexes. Cleavage of the nascent transcript by cleavage factors such as GreA or GreB allows the resumption of elongation from the new 3'terminus. GreA releases sequences of 2 to 3 nucleotides. This chain is Transcription elongation factor GreA, found in Helicobacter pylori (strain P12).